We begin with the raw amino-acid sequence, 134 residues long: Large ribosomal subunit protein eL32 (134 aa).

The protein belongs to the eukaryotic ribosomal protein eL32 family.

This Picrophilus torridus (strain ATCC 700027 / DSM 9790 / JCM 10055 / NBRC 100828 / KAW 2/3) protein is Large ribosomal subunit protein eL32 (rpl32e).